The following is a 201-amino-acid chain: Small ribosomal subunit protein uS4c (201 aa).

The tract at residues 20-44 is disordered; it reads GLTSKRPKAGSDLRNQSRSGKKSQY. The 64-residue stretch at 89–152 folds into the S4 RNA-binding domain; that stretch reads MRLDNILFRL…NSRTLVQNLL (64 aa).

This sequence belongs to the universal ribosomal protein uS4 family. Part of the 30S ribosomal subunit. Contacts protein S5. The interaction surface between S4 and S5 is involved in control of translational fidelity.

It localises to the plastid. Its subcellular location is the chloroplast. Functionally, one of the primary rRNA binding proteins, it binds directly to 16S rRNA where it nucleates assembly of the body of the 30S subunit. Its function is as follows. With S5 and S12 plays an important role in translational accuracy. This is Small ribosomal subunit protein uS4c (rps4) from Barbarea verna (Land cress).